The chain runs to 239 residues: MSKTKPLSADEISRLEALIGYEFKEKARLDRALTHASARSAAAGNYERLEFLGDRVLGLCVAELLFSTFRNASEGELSVRLNQLVSAESCAAIGDEMGLHNFIRTGSDVKKLTGKAMLNVRADVVESLIATLYLDGGLEASRKFILKYWQGRATSVDAGRRDAKTELQEWAHARFAATPAYRVDDRSGPDHDPSFTVTVEIPGVKPETGVERSKRAAEQVAATRLLEREGVWRKSPTGN.

The RNase III domain occupies Ile-12 to Gly-137. Residue Glu-50 coordinates Mg(2+). Asp-54 is a catalytic residue. The Mg(2+) site is built by Asp-123 and Glu-126. The active site involves Glu-126. The 70-residue stretch at Asp-162 to Val-231 folds into the DRBM domain.

It belongs to the ribonuclease III family. As to quaternary structure, homodimer. The cofactor is Mg(2+).

The protein localises to the cytoplasm. The enzyme catalyses Endonucleolytic cleavage to 5'-phosphomonoester.. In terms of biological role, digests double-stranded RNA. Involved in the processing of primary rRNA transcript to yield the immediate precursors to the large and small rRNAs (23S and 16S). Processes some mRNAs, and tRNAs when they are encoded in the rRNA operon. Processes pre-crRNA and tracrRNA of type II CRISPR loci if present in the organism. This chain is Ribonuclease 3, found in Agrobacterium fabrum (strain C58 / ATCC 33970) (Agrobacterium tumefaciens (strain C58)).